A 432-amino-acid polypeptide reads, in one-letter code: Ribosomal protein uS12 methylthiotransferase RimO (432 aa).

The MTTase N-terminal domain occupies 4 to 120 (HNVFLLSLGC…LLQAIGAQYR (117 aa)). [4Fe-4S] cluster is bound by residues C13, C49, C83, C144, C148, and C151. The Radical SAM core domain occupies 130 to 359 (LTPPHISYLK…MELQETIAKE (230 aa)). The 68-residue stretch at 362–429 (QLFEGKELTV…AYELHGTITA (68 aa)) folds into the TRAM domain.

Belongs to the methylthiotransferase family. RimO subfamily. [4Fe-4S] cluster serves as cofactor.

It localises to the cytoplasm. It catalyses the reaction L-aspartate(89)-[ribosomal protein uS12]-hydrogen + (sulfur carrier)-SH + AH2 + 2 S-adenosyl-L-methionine = 3-methylsulfanyl-L-aspartate(89)-[ribosomal protein uS12]-hydrogen + (sulfur carrier)-H + 5'-deoxyadenosine + L-methionine + A + S-adenosyl-L-homocysteine + 2 H(+). Functionally, catalyzes the methylthiolation of an aspartic acid residue of ribosomal protein uS12. The polypeptide is Ribosomal protein uS12 methylthiotransferase RimO (Chlorobium phaeobacteroides (strain DSM 266 / SMG 266 / 2430)).